The following is a 336-amino-acid chain: DNA-directed RNA polymerase subunit alpha (336 aa).

The tract at residues 1 to 238 is alpha N-terminal domain (alpha-NTD); it reads MNDLDLNLVP…NLFLPFLQAE (238 aa). The alpha C-terminal domain (alpha-CTD) stretch occupies residues 267–336; the sequence is AKKVTFQHIF…LQKRFGMRLQ (70 aa).

The protein belongs to the RNA polymerase alpha chain family. As to quaternary structure, in plastids the minimal PEP RNA polymerase catalytic core is composed of four subunits: alpha, beta, beta', and beta''. When a (nuclear-encoded) sigma factor is associated with the core the holoenzyme is formed, which can initiate transcription.

The protein resides in the plastid. It localises to the chloroplast. The enzyme catalyses RNA(n) + a ribonucleoside 5'-triphosphate = RNA(n+1) + diphosphate. In terms of biological role, DNA-dependent RNA polymerase catalyzes the transcription of DNA into RNA using the four ribonucleoside triphosphates as substrates. This chain is DNA-directed RNA polymerase subunit alpha, found in Huperzia lucidula (Shining clubmoss).